Consider the following 408-residue polypeptide: Acetate kinase (408 aa).

Asparagine 7 contributes to the Mg(2+) binding site. Lysine 14 is an ATP binding site. Arginine 91 is a binding site for substrate. Aspartate 148 (proton donor/acceptor) is an active-site residue. ATP is bound by residues 208 to 212, 283 to 285, and 331 to 335; these read HLGNG, DFR, and GIGEN. Glutamate 384 serves as a coordination point for Mg(2+).

Belongs to the acetokinase family. In terms of assembly, homodimer. Mg(2+) is required as a cofactor. It depends on Mn(2+) as a cofactor.

It localises to the cytoplasm. The enzyme catalyses acetate + ATP = acetyl phosphate + ADP. Its pathway is metabolic intermediate biosynthesis; acetyl-CoA biosynthesis; acetyl-CoA from acetate: step 1/2. Functionally, catalyzes the formation of acetyl phosphate from acetate and ATP. Can also catalyze the reverse reaction. The sequence is that of Acetate kinase from Methanosarcina barkeri (strain Fusaro / DSM 804).